The chain runs to 519 residues: Glutamate--cysteine ligase (519 aa).

This sequence belongs to the glutamate--cysteine ligase type 1 family. Type 1 subfamily.

The catalysed reaction is L-cysteine + L-glutamate + ATP = gamma-L-glutamyl-L-cysteine + ADP + phosphate + H(+). Its pathway is sulfur metabolism; glutathione biosynthesis; glutathione from L-cysteine and L-glutamate: step 1/2. The sequence is that of Glutamate--cysteine ligase from Erwinia tasmaniensis (strain DSM 17950 / CFBP 7177 / CIP 109463 / NCPPB 4357 / Et1/99).